Consider the following 436-residue polypeptide: MQVSVESTSALERRMTVGVPAERIETEVNKRLQQTARRAKIPGFRPGKVPMSVIRQRYEASARQEAMGDLIQETFYEAVVEQKLNPAGSPSVEPKSFEKGKDLEYIATFEVFPEFTVSGLEGIKIERLQAEVADADVDNMLDVLRKQNTRFEVVERAAQNDDQLNIDFVGKIDGEAFAGGSAKGTLLVLGSGRMIAGFEEGLVGAKAGEERVLNLTFPEDYQNLDLANKPAEFTVTVNSVAEPKLPELNEEFFALFGVKETGLDGFRAEVQKNMERELRQAIKSKVKNQVMEGLLQANPIEVPKALIGNEVNRLRVQAVQQFGGNIKPDQLPAELFEEQAKRRVVLGLIVAEVVKQHELKADEGRVREMIEEMASAYQEPEQVVAWYFKNEPQLNEVRSVVLEEQVVDTVLQKATVTDKQVSYEEAVKPAEAPQAA.

In terms of domain architecture, PPIase FKBP-type spans 161–246 (DDQLNIDFVG…VNSVAEPKLP (86 aa)).

Belongs to the FKBP-type PPIase family. Tig subfamily.

It is found in the cytoplasm. It carries out the reaction [protein]-peptidylproline (omega=180) = [protein]-peptidylproline (omega=0). Involved in protein export. Acts as a chaperone by maintaining the newly synthesized protein in an open conformation. Functions as a peptidyl-prolyl cis-trans isomerase. The chain is Trigger factor from Pseudomonas paraeruginosa (strain DSM 24068 / PA7) (Pseudomonas aeruginosa (strain PA7)).